The primary structure comprises 491 residues: GTPase Der (491 aa).

The 176-residue stretch at 3–178 folds into the EngA-type G 1 domain; sequence AKIALVGRPN…EMRDLLPEED (176 aa). Residues 9 to 16, 57 to 61, and 130 to 133 each bind GTP; these read GRPNVGKS, DTGGI, and NKVD. Acidic residues predominate over residues 198 to 224; the sequence is DAETEDGASASETEEDITEETVEDEPE. The segment at 198–225 is disordered; it reads DAETEDGASASETEEDITEETVEDEPEA. The EngA-type G 2 domain maps to 227 to 400; it reads LRLCMLGRPN…LAARIRRECS (174 aa). GTP is bound by residues 233–240, 280–284, and 345–348; these read GRPNAGKS, DTAGV, and NKMD. A KH-like domain is found at 401–485; sequence VRIPTGQLNR…PMRVHFRSSH (85 aa).

The protein belongs to the TRAFAC class TrmE-Era-EngA-EngB-Septin-like GTPase superfamily. EngA (Der) GTPase family. In terms of assembly, associates with the 50S ribosomal subunit.

Its function is as follows. GTPase that plays an essential role in the late steps of ribosome biogenesis. In Nitratidesulfovibrio vulgaris (strain ATCC 29579 / DSM 644 / CCUG 34227 / NCIMB 8303 / VKM B-1760 / Hildenborough) (Desulfovibrio vulgaris), this protein is GTPase Der.